Here is a 258-residue protein sequence, read N- to C-terminus: Tryptophan synthase alpha chain (258 aa).

Catalysis depends on proton acceptor residues glutamate 47 and aspartate 58.

Belongs to the TrpA family. In terms of assembly, tetramer of two alpha and two beta chains.

The catalysed reaction is (1S,2R)-1-C-(indol-3-yl)glycerol 3-phosphate + L-serine = D-glyceraldehyde 3-phosphate + L-tryptophan + H2O. It functions in the pathway amino-acid biosynthesis; L-tryptophan biosynthesis; L-tryptophan from chorismate: step 5/5. The alpha subunit is responsible for the aldol cleavage of indoleglycerol phosphate to indole and glyceraldehyde 3-phosphate. The sequence is that of Tryptophan synthase alpha chain from Bacillus cereus (strain G9842).